The chain runs to 103 residues: ESAT-6-like protein EsxF (103 aa).

The protein belongs to the WXG100 family. CFP-10 subfamily.

It is found in the secreted. This Mycobacterium tuberculosis (strain CDC 1551 / Oshkosh) protein is ESAT-6-like protein EsxF.